A 290-amino-acid polypeptide reads, in one-letter code: Arylamine N-acetyltransferase 1 (290 aa).

An N-acetylmethionine modification is found at methionine 1. Residue serine 103 participates in CoA binding. Residue 106-107 (IH) coordinates substrate. CoA is bound at residue tyrosine 208.

Belongs to the arylamine N-acetyltransferase family.

The protein localises to the cytoplasm. The catalysed reaction is an arylamine + acetyl-CoA = an N-acetylarylamine + CoA. Participates in the detoxification of a plethora of hydrazine and arylamine drugs. The chain is Arylamine N-acetyltransferase 1 (NAT1) from Bos taurus (Bovine).